Here is a 109-residue protein sequence, read N- to C-terminus: Thiosulfate sulfurtransferase GlpE (109 aa).

Positions 17–105 (KEGKTALVDI…WARSYPQDIT (89 aa)) constitute a Rhodanese domain. Cys65 (cysteine persulfide intermediate) is an active-site residue.

This sequence belongs to the GlpE family.

It localises to the cytoplasm. The catalysed reaction is thiosulfate + hydrogen cyanide = thiocyanate + sulfite + 2 H(+). It catalyses the reaction thiosulfate + [thioredoxin]-dithiol = [thioredoxin]-disulfide + hydrogen sulfide + sulfite + 2 H(+). Functionally, transferase that catalyzes the transfer of sulfur from thiosulfate to thiophilic acceptors such as cyanide or dithiols. May function in a CysM-independent thiosulfate assimilation pathway by catalyzing the conversion of thiosulfate to sulfite, which can then be used for L-cysteine biosynthesis. In Yersinia pestis bv. Antiqua (strain Antiqua), this protein is Thiosulfate sulfurtransferase GlpE.